We begin with the raw amino-acid sequence, 321 residues long: Ribose-phosphate pyrophosphokinase (321 aa).

Residues 44–46 (DGE) and 103–104 (RQ) contribute to the ATP site. Mg(2+) contacts are provided by His-137 and Asp-179. Lys-202 is an active-site residue. Residues Arg-204, Asp-228, and 232–236 (DTAGT) each bind D-ribose 5-phosphate.

Belongs to the ribose-phosphate pyrophosphokinase family. Class I subfamily. As to quaternary structure, homohexamer. Mg(2+) is required as a cofactor.

The protein localises to the cytoplasm. It catalyses the reaction D-ribose 5-phosphate + ATP = 5-phospho-alpha-D-ribose 1-diphosphate + AMP + H(+). It functions in the pathway metabolic intermediate biosynthesis; 5-phospho-alpha-D-ribose 1-diphosphate biosynthesis; 5-phospho-alpha-D-ribose 1-diphosphate from D-ribose 5-phosphate (route I): step 1/1. In terms of biological role, involved in the biosynthesis of the central metabolite phospho-alpha-D-ribosyl-1-pyrophosphate (PRPP) via the transfer of pyrophosphoryl group from ATP to 1-hydroxyl of ribose-5-phosphate (Rib-5-P). The polypeptide is Ribose-phosphate pyrophosphokinase (Staphylococcus saprophyticus subsp. saprophyticus (strain ATCC 15305 / DSM 20229 / NCIMB 8711 / NCTC 7292 / S-41)).